A 261-amino-acid chain; its full sequence is uncharacterized protein (261 aa).

This sequence belongs to the PaiB family.

This is an uncharacterized protein from Aspergillus fumigatus (strain ATCC MYA-4609 / CBS 101355 / FGSC A1100 / Af293) (Neosartorya fumigata).